Here is a 916-residue protein sequence, read N- to C-terminus: Translation initiation factor IF-2 (916 aa).

The segment at 50 to 326 is disordered; that stretch reads NRDKESTSQP…NSTLQQGFNK (277 aa). Basic and acidic residues predominate over residues 109–241; that stretch reads AQREAEEKAR…LAEENAEKWT (133 aa). Residues 277–291 show a composition bias toward basic residues; the sequence is GRGRAAKAPRPKKNN. Residues 292–304 show a composition bias toward basic and acidic residues; the sequence is RHSEKADREEARA. One can recognise a tr-type G domain in the interval 415-584; it reads SRAPVVTIMG…LLQAEVLELK (170 aa). Residues 424-431 form a G1 region; that stretch reads GHVDHGKT. 424-431 serves as a coordination point for GTP; the sequence is GHVDHGKT. The G2 stretch occupies residues 449-453; sequence GITQH. A G3 region spans residues 470-473; that stretch reads DTPG. Residues 470–474 and 524–527 contribute to the GTP site; these read DTPGH and NKID. Residues 524-527 form a G4 region; it reads NKID. The segment at 560-562 is G5; it reads SAK.

The protein belongs to the TRAFAC class translation factor GTPase superfamily. Classic translation factor GTPase family. IF-2 subfamily.

The protein localises to the cytoplasm. Functionally, one of the essential components for the initiation of protein synthesis. Protects formylmethionyl-tRNA from spontaneous hydrolysis and promotes its binding to the 30S ribosomal subunits. Also involved in the hydrolysis of GTP during the formation of the 70S ribosomal complex. The protein is Translation initiation factor IF-2 of Proteus mirabilis (strain HI4320).